The chain runs to 893 residues: UPF0182 protein CLK_3152 (893 aa).

7 consecutive transmembrane segments (helical) span residues 9–29 (IPLF…NFII), 49–69 (AIII…WMYY), 94–114 (LFFI…SSSY), 154–174 (VIIS…FILE), 202–222 (LAIV…IKIW), 246–266 (FYKI…LSIV), and 273–293 (VSIC…ASFL).

It belongs to the UPF0182 family.

It is found in the cell membrane. The sequence is that of UPF0182 protein CLK_3152 from Clostridium botulinum (strain Loch Maree / Type A3).